Consider the following 178-residue polypeptide: Adenine phosphoribosyltransferase (178 aa).

Belongs to the purine/pyrimidine phosphoribosyltransferase family. Homodimer.

It localises to the cytoplasm. The catalysed reaction is AMP + diphosphate = 5-phospho-alpha-D-ribose 1-diphosphate + adenine. It participates in purine metabolism; AMP biosynthesis via salvage pathway; AMP from adenine: step 1/1. Its function is as follows. Catalyzes a salvage reaction resulting in the formation of AMP, that is energically less costly than de novo synthesis. This Cereibacter sphaeroides (strain KD131 / KCTC 12085) (Rhodobacter sphaeroides) protein is Adenine phosphoribosyltransferase.